Consider the following 208-residue polypeptide: Imidazoleglycerol-phosphate dehydratase (208 aa).

It belongs to the imidazoleglycerol-phosphate dehydratase family.

It localises to the cytoplasm. It catalyses the reaction D-erythro-1-(imidazol-4-yl)glycerol 3-phosphate = 3-(imidazol-4-yl)-2-oxopropyl phosphate + H2O. It participates in amino-acid biosynthesis; L-histidine biosynthesis; L-histidine from 5-phospho-alpha-D-ribose 1-diphosphate: step 6/9. This is Imidazoleglycerol-phosphate dehydratase from Arthrobacter sp. (strain FB24).